The sequence spans 281 residues: Digeranylgeranylglyceryl phosphate synthase (281 aa).

The next 7 helical transmembrane spans lie at 14 to 34 (AMAA…LSSA), 38 to 58 (VSLS…VTGA), 95 to 115 (LFLF…CGII), 149 to 169 (FLFG…VLFL), 207 to 227 (ASYI…VPYL), 235 to 255 (YLFV…QILG), and 259 to 279 (AARS…SFIV).

It belongs to the UbiA prenyltransferase family. DGGGP synthase subfamily. Requires Mg(2+) as cofactor.

Its subcellular location is the cell membrane. It catalyses the reaction sn-3-O-(geranylgeranyl)glycerol 1-phosphate + (2E,6E,10E)-geranylgeranyl diphosphate = 2,3-bis-O-(geranylgeranyl)-sn-glycerol 1-phosphate + diphosphate. The protein operates within membrane lipid metabolism; glycerophospholipid metabolism. In terms of biological role, prenyltransferase that catalyzes the transfer of the geranylgeranyl moiety of geranylgeranyl diphosphate (GGPP) to the C2 hydroxyl of (S)-3-O-geranylgeranylglyceryl phosphate (GGGP). This reaction is the second ether-bond-formation step in the biosynthesis of archaeal membrane lipids. This is Digeranylgeranylglyceryl phosphate synthase from Methanococcoides burtonii (strain DSM 6242 / NBRC 107633 / OCM 468 / ACE-M).